Consider the following 500-residue polypeptide: NAD(P)H-quinone oxidoreductase chain 4, chloroplastic (500 aa).

A run of 14 helical transmembrane segments spans residues 4–24 (FPWLTIIVVFPIFAGSLIFFL), 35–55 (YTICICILELLLTTYAFCYHF), 87–107 (IGPILLTGFITTLATLAAWPI), 113–130 (LFHFLMLAMYSGQIGSFS), 134–154 (LLLFFIMWELELIPVYLLLCM), 167–187 (FILYTAGGSVFLLMGVLGVAL), 208–228 (VLEIIFYIGFFIAFAVKSPII), 242–262 (HYSTCMLLAGILLKMGAYGLI), 272–292 (AHSIFSPWLMIIGTIQIIYAA), 305–325 (IAYSSVSHMGFIIIGISSLTD), 330–350 (GALLQIISHGFIGAALFFLAG), 386–406 (LALPGMSGFVAELIVFFGIIT), 411–431 (LLIPKILITFVMAIGMILTPI), and 462–482 (LFLSISIFLPVIGIGIYPDFV).

It belongs to the complex I subunit 4 family.

Its subcellular location is the plastid. The protein resides in the chloroplast thylakoid membrane. It catalyses the reaction a plastoquinone + NADH + (n+1) H(+)(in) = a plastoquinol + NAD(+) + n H(+)(out). The enzyme catalyses a plastoquinone + NADPH + (n+1) H(+)(in) = a plastoquinol + NADP(+) + n H(+)(out). This is NAD(P)H-quinone oxidoreductase chain 4, chloroplastic from Nicotiana tomentosiformis (Tobacco).